Reading from the N-terminus, the 205-residue chain is N-(5'-phosphoribosyl)anthranilate isomerase (205 aa).

It belongs to the TrpF family.

The catalysed reaction is N-(5-phospho-beta-D-ribosyl)anthranilate = 1-(2-carboxyphenylamino)-1-deoxy-D-ribulose 5-phosphate. It participates in amino-acid biosynthesis; L-tryptophan biosynthesis; L-tryptophan from chorismate: step 3/5. In Clostridium acetobutylicum (strain ATCC 824 / DSM 792 / JCM 1419 / IAM 19013 / LMG 5710 / NBRC 13948 / NRRL B-527 / VKM B-1787 / 2291 / W), this protein is N-(5'-phosphoribosyl)anthranilate isomerase.